Here is a 177-residue protein sequence, read N- to C-terminus: Large ribosomal subunit protein uL6 (177 aa).

The interval 151–177 is disordered; sequence LRPPEPYKGKGVRYAGENVRRKEGKKK.

This sequence belongs to the universal ribosomal protein uL6 family. In terms of assembly, part of the 50S ribosomal subunit.

In terms of biological role, this protein binds to the 23S rRNA, and is important in its secondary structure. It is located near the subunit interface in the base of the L7/L12 stalk, and near the tRNA binding site of the peptidyltransferase center. This Phenylobacterium zucineum (strain HLK1) protein is Large ribosomal subunit protein uL6.